Consider the following 64-residue polypeptide: UPF0434 protein MADE_1009415 (64 aa).

Belongs to the UPF0434 family.

This Alteromonas mediterranea (strain DSM 17117 / CIP 110805 / LMG 28347 / Deep ecotype) protein is UPF0434 protein MADE_1009415.